The following is a 429-amino-acid chain: Ribosomal RNA small subunit methyltransferase B (429 aa).

Residues 254 to 260 (CAAPGGK), Asp-277, Asp-303, and Asp-322 contribute to the S-adenosyl-L-methionine site. Catalysis depends on Cys-375, which acts as the Nucleophile.

The protein belongs to the class I-like SAM-binding methyltransferase superfamily. RsmB/NOP family.

Its subcellular location is the cytoplasm. It carries out the reaction cytidine(967) in 16S rRNA + S-adenosyl-L-methionine = 5-methylcytidine(967) in 16S rRNA + S-adenosyl-L-homocysteine + H(+). Functionally, specifically methylates the cytosine at position 967 (m5C967) of 16S rRNA. In Shigella flexneri serotype 5b (strain 8401), this protein is Ribosomal RNA small subunit methyltransferase B.